We begin with the raw amino-acid sequence, 895 residues long: Pentatricopeptide repeat-containing protein At1g74600, chloroplastic (895 aa).

A chloroplast-targeting transit peptide spans 1–71 (MNCLANESLN…CNLRTTKILQ (71 aa)). PPR repeat units follow at residues 83 to 113 (DVFL…IPQP), 114 to 148 (DVVS…GFEA), 149 to 183 (NEIS…GYFF), 184 to 214 (YEVV…SLSA), 215 to 249 (NVYC…FQKP), 250 to 280 (DSYT…VIKC), 284 to 314 (DVFV…IPNP), 315 to 349 (SVVS…GVEI), 350 to 384 (NNCT…GFYL), 385 to 415 (DSSV…LDDI), 417 to 451 (RQNI…GLRT), 452 to 483 (DEFS…GLVL), 484 to 514 (DLTV…IPFK), 515 to 549 (DNAC…GTSP), 550 to 584 (DEST…GIDK), 585 to 615 (GMDL…LPEL), 616 to 650 (DPVS…GFTM), 651 to 685 (DSFA…GLCT), 686 to 716 (EPSV…INGP), 717 to 751 (DLIA…GFKP), 752 to 787 (DKVT…GIEP), and 788 to 818 (ENRH…MHIK). The segment at 824-895 (WGTLLAACKI…VQKEPGWSSV (72 aa)) is type E motif; degenerate.

Belongs to the PPR family. PCMP-E subfamily.

It is found in the plastid. The protein localises to the chloroplast. The protein is Pentatricopeptide repeat-containing protein At1g74600, chloroplastic (PCMP-E69) of Arabidopsis thaliana (Mouse-ear cress).